The primary structure comprises 494 residues: MTNWQQQLPLTDTQKNELDKSVLRYLNWNYKQTVRHEHAQDYESVRHAIVTLSGFLLQESVDRQEFISNNDTSNESMVDIDELLLPKKWNSIVRLQKKIIELEQNTETLVSQIKDLNTQVSELAQFKPTTSNGTSAHNVLKWIPRNLPSCLINVESSVTSVKLHPNLPIVFVATDHGKLYAFDLFNYTIPLASLQSHTKAITSMDVLFTNFTNSSKKNYLVVVTASKDLQIHVFKWVSEECKFQQIRSLLGHEHIVSAVKIWQKNNDVHIASCSRDQTVKIWDFHNGWSLKTFQPHSQWVRSIDVLGDYIISGSHDTTLRLTHWPSGNGLSVGTGHEFPIEKVKFIHFIEDSPEIRFRTPSTDRYKNWGMQYCVSASRDRTIKIWEIPLPTLMAHRAPIPNPTDSNFRCVLTFKGHLSWVRDISIRGQYLFSCADDKSVRCWDLNTGQCLHVWEKLHTGFVNCLDLDVDFDSNVTPRQMMVTGGLDCKSNVFMR.

The LisH domain occupies 14–46; sequence QKNELDKSVLRYLNWNYKQTVRHEHAQDYESVR. Positions 90–123 form a coiled coil; it reads NSIVRLQKKIIELEQNTETLVSQIKDLNTQVSEL. 7 WD repeats span residues 153-192, 196-244, 251-292, 295-334, 347-395, 415-454, and 457-492; these read NVES…IPLA, SHTK…CKFQ, GHEH…SLKT, PHSQ…SVGT, HFIE…LMAH, GHLS…HVWE, and HTGF…SNVF.

Belongs to the WD repeat LIS1/nudF family. Self-associates. Interacts with NDL1 and dynein.

Its subcellular location is the cytoplasm. It is found in the cytoskeleton. The protein resides in the spindle pole. In terms of biological role, positively regulates the activity of the minus-end directed microtubule motor protein dynein. Plays a central role in positioning the mitotic spindle at the bud neck during cell division. Targets cytoplasmic dynein to microtubule plus ends, thereby promoting dynein-mediated microtubule sliding along the bud cortex and consequently the movement of the mitotic spindle to the bud neck. The polypeptide is Nuclear distribution protein PAC1 (Saccharomyces cerevisiae (strain Lalvin EC1118 / Prise de mousse) (Baker's yeast)).